The primary structure comprises 318 residues: NAC domain-containing protein 68 (318 aa).

One can recognise an NAC domain in the interval 21 to 175 (LPPGFRFHPT…EWVLCRLYNK (155 aa)).

As to expression, expressed in stems, leaf blades and callus. Weakly expressed in developing flowers.

Its subcellular location is the nucleus. Its function is as follows. Probable transcription factor involved in stress response. The protein is NAC domain-containing protein 68 of Oryza sativa subsp. japonica (Rice).